The primary structure comprises 36 residues: Glucagon-2 (36 aa).

Belongs to the glucagon family.

It is found in the secreted. Glucagon plays a key role in glucose metabolism and homeostasis. Regulates blood glucose by increasing gluconeogenesis and decreasing glycolysis. In Huso dauricus (Kaluga sturgeon), this protein is Glucagon-2.